A 369-amino-acid polypeptide reads, in one-letter code: 4-hydroxy-3-methylbut-2-en-1-yl diphosphate synthase (flavodoxin) (369 aa).

[4Fe-4S] cluster-binding residues include C270, C273, C305, and E312.

The protein belongs to the IspG family. [4Fe-4S] cluster is required as a cofactor.

The catalysed reaction is (2E)-4-hydroxy-3-methylbut-2-enyl diphosphate + oxidized [flavodoxin] + H2O + 2 H(+) = 2-C-methyl-D-erythritol 2,4-cyclic diphosphate + reduced [flavodoxin]. It participates in isoprenoid biosynthesis; isopentenyl diphosphate biosynthesis via DXP pathway; isopentenyl diphosphate from 1-deoxy-D-xylulose 5-phosphate: step 5/6. Converts 2C-methyl-D-erythritol 2,4-cyclodiphosphate (ME-2,4cPP) into 1-hydroxy-2-methyl-2-(E)-butenyl 4-diphosphate. The sequence is that of 4-hydroxy-3-methylbut-2-en-1-yl diphosphate synthase (flavodoxin) from Psychromonas ingrahamii (strain DSM 17664 / CCUG 51855 / 37).